Here is a 110-residue protein sequence, read N- to C-terminus: MTSTTNTMCGSYYRNYNGGHGYGCCGYGGLGCGYGGCGYGCCGYGGLGFGYGGLDCGYGGLGCGYGSFCGCGYRGLDCGYGCGYGYVSHSFCGCGYRCGSGYGSSFGYYY.

Belongs to the KRTAP type 6 family. Interacts with hair keratins.

In the hair cortex, hair keratin intermediate filaments are embedded in an interfilamentous matrix, consisting of hair keratin-associated proteins (KRTAP), which are essential for the formation of a rigid and resistant hair shaft through their extensive disulfide bond cross-linking with abundant cysteine residues of hair keratins. The matrix proteins include the high-sulfur and high-glycine-tyrosine keratins. This is Keratin-associated protein 6-3 from Homo sapiens (Human).